We begin with the raw amino-acid sequence, 375 residues long: S-(hydroxymethyl)glutathione dehydrogenase (375 aa).

Cys40 is a binding site for Zn(2+). His41 lines the NAD(+) pocket. Positions 62, 63, 92, 95, 98, 106, and 170 each coordinate Zn(2+). Residues 195–200, Asp219, 293–295, and 318–320 contribute to the NAD(+) site; these read GLGGIG, IGV, and TAF.

This sequence belongs to the zinc-containing alcohol dehydrogenase family. Class-III subfamily. Homotetramer. The cofactor is Zn(2+).

It carries out the reaction a primary alcohol + NAD(+) = an aldehyde + NADH + H(+). It catalyses the reaction a secondary alcohol + NAD(+) = a ketone + NADH + H(+). The catalysed reaction is S-(hydroxymethyl)glutathione + NADP(+) = S-formylglutathione + NADPH + H(+). The enzyme catalyses S-(hydroxymethyl)glutathione + NAD(+) = S-formylglutathione + NADH + H(+). It carries out the reaction S-nitrosoglutathione + NADH + H(+) = S-(hydroxysulfenamide)glutathione + NAD(+). In terms of biological role, oxidizes long-chain alcohols and, in the presence of glutathione, is able to oxidize formaldehyde. Also acts as a S-nitroso-glutathione reductase by catalyzing the NADH-dependent reduction of S-nitrosoglutathione, thereby regulating protein S-nitrosylation. The chain is S-(hydroxymethyl)glutathione dehydrogenase (flhA) from Paracoccus denitrificans.